A 330-amino-acid polypeptide reads, in one-letter code: Formylaminopyrimidine-binding protein (330 aa).

An N-terminal signal peptide occupies residues 1-18; that stretch reads MKSFKIISLLLAILFLAS. Cys-19 carries N-palmitoyl cysteine lipidation. Cys-19 carries the S-diacylglycerol cysteine lipid modification. Substrate is bound by residues 38–39, Tyr-90, Asn-145, Tyr-188, and Glu-192; that span reads DW.

This sequence belongs to the NMT1 family. As to quaternary structure, the complex is likely composed of an ATP-binding protein (ThiZ), a transmembrane protein (ThiX) and a solute-binding protein (ThiY).

It localises to the cell membrane. The protein operates within cofactor biosynthesis; thiamine diphosphate biosynthesis. Participates in a thiamine pyrimidine salvage pathway as part of the ABC transporter complex ThiXYZ involved in the import of thiamine degradation products. Binds the formylaminopyrimidine N-formyl-4-amino-5-aminomethyl-2-methylpyrimidine (FAMP). Does not bind thiamine. This Halalkalibacterium halodurans (strain ATCC BAA-125 / DSM 18197 / FERM 7344 / JCM 9153 / C-125) (Bacillus halodurans) protein is Formylaminopyrimidine-binding protein.